We begin with the raw amino-acid sequence, 272 residues long: Shikimate dehydrogenase (NADP(+)) (272 aa).

Shikimate contacts are provided by residues 14–16 (SKS) and Thr-61. Lys-65 serves as the catalytic Proton acceptor. Glu-77 lines the NADP(+) pocket. Positions 86 and 102 each coordinate shikimate. NADP(+) is bound by residues 126–130 (GAGGA), 149–154 (NRTVSR), and Met-213. Tyr-215 contributes to the shikimate binding site. Gly-237 lines the NADP(+) pocket.

Belongs to the shikimate dehydrogenase family. As to quaternary structure, homodimer.

It catalyses the reaction shikimate + NADP(+) = 3-dehydroshikimate + NADPH + H(+). It participates in metabolic intermediate biosynthesis; chorismate biosynthesis; chorismate from D-erythrose 4-phosphate and phosphoenolpyruvate: step 4/7. Involved in the biosynthesis of the chorismate, which leads to the biosynthesis of aromatic amino acids. Catalyzes the reversible NADPH linked reduction of 3-dehydroshikimate (DHSA) to yield shikimate (SA). The polypeptide is Shikimate dehydrogenase (NADP(+)) (Shigella boydii serotype 4 (strain Sb227)).